The chain runs to 176 residues: Ribosome maturation factor RimM (176 aa).

Positions 101-174 (EGHYYIYQLL…EIRVELPPGL (74 aa)) constitute a PRC barrel domain.

This sequence belongs to the RimM family. As to quaternary structure, binds ribosomal protein uS19.

The protein resides in the cytoplasm. Its function is as follows. An accessory protein needed during the final step in the assembly of 30S ribosomal subunit, possibly for assembly of the head region. Essential for efficient processing of 16S rRNA. May be needed both before and after RbfA during the maturation of 16S rRNA. It has affinity for free ribosomal 30S subunits but not for 70S ribosomes. This chain is Ribosome maturation factor RimM, found in Moorella thermoacetica (strain ATCC 39073 / JCM 9320).